Here is a 338-residue protein sequence, read N- to C-terminus: Glycerol-3-phosphate dehydrogenase [NAD(P)+] (338 aa).

The NADPH site is built by serine 14, tyrosine 15, histidine 35, and lysine 109. Lysine 109, glycine 138, and threonine 140 together coordinate sn-glycerol 3-phosphate. Alanine 142 serves as a coordination point for NADPH. Sn-glycerol 3-phosphate-binding residues include lysine 194, aspartate 247, serine 257, arginine 258, and asparagine 259. Lysine 194 (proton acceptor) is an active-site residue. Arginine 258 is an NADPH binding site. Residues valine 282 and glutamate 284 each coordinate NADPH.

It belongs to the NAD-dependent glycerol-3-phosphate dehydrogenase family.

It is found in the cytoplasm. The catalysed reaction is sn-glycerol 3-phosphate + NAD(+) = dihydroxyacetone phosphate + NADH + H(+). It catalyses the reaction sn-glycerol 3-phosphate + NADP(+) = dihydroxyacetone phosphate + NADPH + H(+). It participates in membrane lipid metabolism; glycerophospholipid metabolism. Functionally, catalyzes the reduction of the glycolytic intermediate dihydroxyacetone phosphate (DHAP) to sn-glycerol 3-phosphate (G3P), the key precursor for phospholipid synthesis. The polypeptide is Glycerol-3-phosphate dehydrogenase [NAD(P)+] (Shewanella baltica (strain OS185)).